The sequence spans 1024 residues: Probable alpha-mannosidase At5g13980 (1024 aa).

The signal sequence occupies residues 1-21 (MDLAKFLCWIVLLLGISLVES). N-linked (GlcNAc...) asparagine glycosylation occurs at asparagine 27. Zn(2+)-binding residues include histidine 46 and aspartate 48. Residue asparagine 63 is glycosylated (N-linked (GlcNAc...) asparagine). A Zn(2+)-binding site is contributed by aspartate 168. Asparagine 278 carries an N-linked (GlcNAc...) asparagine glycan. Histidine 410 is a binding site for Zn(2+). A disulfide bond links cysteine 461 and cysteine 469. 6 N-linked (GlcNAc...) asparagine glycosylation sites follow: asparagine 465, asparagine 475, asparagine 637, asparagine 658, asparagine 733, and asparagine 823. An intrachain disulfide couples cysteine 827 to cysteine 832.

This sequence belongs to the glycosyl hydrolase 38 family. Homodimer. Zn(2+) serves as cofactor.

It carries out the reaction Hydrolysis of terminal, non-reducing alpha-D-mannose residues in alpha-D-mannosides.. Functionally, liberates mannose from p-nitrophenyl-alpha-D-mannoside in vitro. This is Probable alpha-mannosidase At5g13980 from Arabidopsis thaliana (Mouse-ear cress).